The primary structure comprises 183 residues: Deoxyuridine 5'-triphosphate nucleotidohydrolase (183 aa).

Substrate is bound by residues 67–69 (RSG), asparagine 80, 84–86 (TID), and lysine 94. Residues 138–183 (RAEGGFGSTGGHAGLDPASGTSGQVAEGGPTGGNRYASVVSDREGQ) form a disordered region. The span at 141-150 (GGFGSTGGHA) shows a compositional bias: gly residues.

This sequence belongs to the dUTPase family. The cofactor is Mg(2+).

The enzyme catalyses dUTP + H2O = dUMP + diphosphate + H(+). Its pathway is pyrimidine metabolism; dUMP biosynthesis; dUMP from dCTP (dUTP route): step 2/2. Functionally, this enzyme is involved in nucleotide metabolism: it produces dUMP, the immediate precursor of thymidine nucleotides and it decreases the intracellular concentration of dUTP so that uracil cannot be incorporated into DNA. The protein is Deoxyuridine 5'-triphosphate nucleotidohydrolase of Streptomyces coelicolor (strain ATCC BAA-471 / A3(2) / M145).